The sequence spans 314 residues: Putative S-adenosyl-L-methionine-dependent methyltransferase MRA_3805 (314 aa).

S-adenosyl-L-methionine-binding positions include aspartate 132 and 161-162; that span reads DL.

Belongs to the UPF0677 family.

Exhibits S-adenosyl-L-methionine-dependent methyltransferase activity. The polypeptide is Putative S-adenosyl-L-methionine-dependent methyltransferase MRA_3805 (Mycobacterium tuberculosis (strain ATCC 25177 / H37Ra)).